A 1214-amino-acid chain; its full sequence is Myosin-1 (1214 aa).

Residues 1–21 (MAIIKRGARNKTAQEPAKRSA) form a disordered region. The 680-residue stretch at 36-715 (VGVSDLTLLS…TLFALEHMRD (680 aa)) folds into the Myosin motor domain. 129-136 (GESGAGKT) serves as a coordination point for ATP. Phosphoserine is present on Ser-357. Positions 404–486 (SIGILDIYGF…PGIFAAMNDS (83 aa)) are actin-binding. IQ domains lie at 719 to 739 (YNMAARIQRAWRRFLQRRIDS) and 740 to 765 (ATRIQRAIREKKGGNKYEKLRDEGSK). Residues 771–961 (KERRTMSLLG…TILVRRGHPA (191 aa)) form the TH1 domain. Disordered stretches follow at residues 926-1090 (KPGK…SELP), 1129-1177 (HQGG…AAAQ), and 1193-1214 (NKMRVESDGEDNGNDDDDDDDW). The span at 965–980 (QKKKPKKGKGHSKHHS) shows a compositional bias: basic residues. Low complexity-rich tracts occupy residues 981 to 1000 (TSTSAPRSSVQSSQPSAPVS) and 1037 to 1057 (AAQPQATPQPAQVTQPQQKKV). The segment covering 1058–1067 (APPPPPPPPM) has biased composition (pro residues). An SH3 domain is found at 1069 to 1131 (SSEPKYEAAY…PTNYVVKHQG (63 aa)). A compositionally biased stretch (low complexity) spans 1157–1177 (VSSSQSETATTATPASVAAAQ). Acidic residues predominate over residues 1200 to 1214 (DGEDNGNDDDDDDDW).

Belongs to the TRAFAC class myosin-kinesin ATPase superfamily. Myosin family. Phosphorylation of the TEDS site (Ser-357) is required for the polarization of the actin cytoskeleton. Phosphorylation probably activates the myosin-I ATPase activity.

The protein resides in the cytoplasm. It localises to the cytoskeleton. Its subcellular location is the actin patch. In terms of biological role, type-I myosin implicated in the organization of the actin cytoskeleton. Required for proper actin cytoskeleton polarization. At the cell cortex, assembles in patch-like structures together with proteins from the actin-polymerizing machinery and promotes actin assembly. Functions as actin nucleation-promoting factor (NPF) for the Arp2/3 complex. In Vanderwaltozyma polyspora (strain ATCC 22028 / DSM 70294 / BCRC 21397 / CBS 2163 / NBRC 10782 / NRRL Y-8283 / UCD 57-17) (Kluyveromyces polysporus), this protein is Myosin-1 (MYO1).